We begin with the raw amino-acid sequence, 171 residues long: Small ribosomal subunit protein uS13 (171 aa).

The tract at residues 128-171 (HERGQKVRGQRTKSTGRTEGTIGVNVEAIKEEQAEDDAADGGEE) is disordered. Residues 160–171 (QAEDDAADGGEE) are compositionally biased toward acidic residues.

It belongs to the universal ribosomal protein uS13 family. As to quaternary structure, part of the 30S ribosomal subunit. Forms a loose heterodimer with protein S19. Forms two bridges to the 50S subunit in the 70S ribosome.

Located at the top of the head of the 30S subunit, it contacts several helices of the 16S rRNA. In the 70S ribosome it contacts the 23S rRNA (bridge B1a) and protein L5 of the 50S subunit (bridge B1b), connecting the 2 subunits; these bridges are implicated in subunit movement. The chain is Small ribosomal subunit protein uS13 from Halobacterium salinarum (strain ATCC 700922 / JCM 11081 / NRC-1) (Halobacterium halobium).